The following is a 153-amino-acid chain: Endoribonuclease YbeY (153 aa).

Zn(2+) is bound by residues His-114, His-118, and His-124.

Belongs to the endoribonuclease YbeY family. Requires Zn(2+) as cofactor.

It localises to the cytoplasm. Functionally, single strand-specific metallo-endoribonuclease involved in late-stage 70S ribosome quality control and in maturation of the 3' terminus of the 16S rRNA. The polypeptide is Endoribonuclease YbeY (Shewanella putrefaciens (strain CN-32 / ATCC BAA-453)).